Here is a 511-residue protein sequence, read N- to C-terminus: NADH-quinone oxidoreductase subunit N 1 (511 aa).

The next 14 membrane-spanning stretches (helical) occupy residues 15 to 35 (LALP…LDLV), 46 to 66 (ALAL…WQAV), 89 to 109 (FAIY…LMSI), 120 to 140 (GEYH…ASGM), 142 to 162 (LILL…LVGF), 177 to 197 (LLLG…FYGL), 221 to 241 (PIAL…IAAV), 264 to 284 (VAVK…MLWP), 289 to 309 (YTPI…FAAL), 317 to 337 (LLAY…VASD), 347 to 367 (GILV…AVIT), 393 to 413 (AVLL…AGFW), 426 to 446 (GHYT…YYYL), and 471 to 491 (AALW…EVFL).

Belongs to the complex I subunit 2 family. In terms of assembly, NDH-1 is composed of 14 different subunits. Subunits NuoA, H, J, K, L, M, N constitute the membrane sector of the complex.

The protein localises to the cell inner membrane. The catalysed reaction is a quinone + NADH + 5 H(+)(in) = a quinol + NAD(+) + 4 H(+)(out). Functionally, NDH-1 shuttles electrons from NADH, via FMN and iron-sulfur (Fe-S) centers, to quinones in the respiratory chain. The immediate electron acceptor for the enzyme in this species is believed to be ubiquinone. Couples the redox reaction to proton translocation (for every two electrons transferred, four hydrogen ions are translocated across the cytoplasmic membrane), and thus conserves the redox energy in a proton gradient. The protein is NADH-quinone oxidoreductase subunit N 1 of Koribacter versatilis (strain Ellin345).